The sequence spans 210 residues: Uridine kinase (210 aa).

14–21 (GGSGSGKT) provides a ligand contact to ATP.

The protein belongs to the uridine kinase family.

The protein localises to the cytoplasm. It carries out the reaction uridine + ATP = UMP + ADP + H(+). It catalyses the reaction cytidine + ATP = CMP + ADP + H(+). It participates in pyrimidine metabolism; CTP biosynthesis via salvage pathway; CTP from cytidine: step 1/3. Its pathway is pyrimidine metabolism; UMP biosynthesis via salvage pathway; UMP from uridine: step 1/1. The polypeptide is Uridine kinase (Deinococcus radiodurans (strain ATCC 13939 / DSM 20539 / JCM 16871 / CCUG 27074 / LMG 4051 / NBRC 15346 / NCIMB 9279 / VKM B-1422 / R1)).